The sequence spans 505 residues: uncharacterized protein (505 aa).

The 248-residue stretch at Cys-193 to Arg-440 folds into the Radical SAM core domain. 3 residues coordinate [4Fe-4S] cluster: Cys-208, Cys-216, and Cys-219. The 65-residue stretch at Lys-435–Lys-499 folds into the TRAM domain.

[4Fe-4S] cluster is required as a cofactor.

This is an uncharacterized protein from Methanocaldococcus jannaschii (strain ATCC 43067 / DSM 2661 / JAL-1 / JCM 10045 / NBRC 100440) (Methanococcus jannaschii).